The following is a 445-amino-acid chain: Exodeoxyribonuclease 7 large subunit (445 aa).

Belongs to the XseA family. In terms of assembly, heterooligomer composed of large and small subunits.

The protein localises to the cytoplasm. The enzyme catalyses Exonucleolytic cleavage in either 5'- to 3'- or 3'- to 5'-direction to yield nucleoside 5'-phosphates.. Functionally, bidirectionally degrades single-stranded DNA into large acid-insoluble oligonucleotides, which are then degraded further into small acid-soluble oligonucleotides. This chain is Exodeoxyribonuclease 7 large subunit, found in Staphylococcus aureus (strain JH1).